A 71-amino-acid polypeptide reads, in one-letter code: Augerpeptide-s7a (71 aa).

The first 20 residues, 1–20 (MSALKFVLICGLVLLLIETI), serve as a signal peptide directing secretion. Positions 21-29 (PGVSLNLMR) are excised as a propeptide. 3 cysteine pairs are disulfide-bonded: Cys36/Cys48, Cys42/Cys65, and Cys47/Cys68.

As to expression, expressed by the venom duct.

The protein localises to the secreted. In terms of biological role, elicits an uncoordinated twisting syndrome when injected into C.elegans, but has no effect on mice. This chain is Augerpeptide-s7a, found in Terebra subulata (Chocolate spotted auger).